We begin with the raw amino-acid sequence, 180 residues long: MKGGKRVQTARPNRINSEIRAQEVRLTGLEGEQLGIVSLREALEKAEEAGVDLVEISPNAEPPVCRIMDYGKFLYEKSKSSKEQKKKQKVIQVKEIKFRPGTDEGDYQVKLRSLIRFLEEGDKAKITLRFRGREMAHQQIGMEVLNRVKNDLQELAVVESFPTKIEGRQMIMVLAPKKKQ.

This sequence belongs to the IF-3 family. Monomer.

Its subcellular location is the cytoplasm. Functionally, IF-3 binds to the 30S ribosomal subunit and shifts the equilibrium between 70S ribosomes and their 50S and 30S subunits in favor of the free subunits, thus enhancing the availability of 30S subunits on which protein synthesis initiation begins. The chain is Translation initiation factor IF-3 from Salmonella typhi.